The sequence spans 692 residues: Elongation factor G (692 aa).

A tr-type G domain is found at Glu8–Leu282. GTP contacts are provided by residues Ala17 to Thr24, Asp81 to His85, and Asn135 to Asp138.

This sequence belongs to the TRAFAC class translation factor GTPase superfamily. Classic translation factor GTPase family. EF-G/EF-2 subfamily.

The protein localises to the cytoplasm. Functionally, catalyzes the GTP-dependent ribosomal translocation step during translation elongation. During this step, the ribosome changes from the pre-translocational (PRE) to the post-translocational (POST) state as the newly formed A-site-bound peptidyl-tRNA and P-site-bound deacylated tRNA move to the P and E sites, respectively. Catalyzes the coordinated movement of the two tRNA molecules, the mRNA and conformational changes in the ribosome. This chain is Elongation factor G, found in Streptococcus agalactiae serotype III (strain NEM316).